The sequence spans 566 residues: Viral IRF3-like protein (566 aa).

Disordered regions lie at residues proline 151–cysteine 170 and glutamine 176–aspartate 236.

This sequence belongs to the IRF family. Interacts with host SKP2. Interacts with host USP7.

In terms of biological role, plays a role in the inhibition of host immune response. Interferes with the transactivating potential of cellular IRFs IRF3 and IRF7 that play a critical role in the induction of IFNA and IFNB genes. Additionally, interferes with surface major histocompatibility complex class II (MHC-II) antigen presentation. The protein is Viral IRF3-like protein (vIRF-3) of Human herpesvirus 8 type P (isolate GK18) (HHV-8).